Consider the following 154-residue polypeptide: PTTG1IP family member 2 (154 aa).

An N-terminal signal peptide occupies residues 1-26 (MCWLRAWGQILLPVFLSLFLIQLLIS). The Extracellular portion of the chain corresponds to 27–97 (FSENGFIHSP…SIYWLNCKVD (71 aa)). A helical membrane pass occupies residues 98–118 (MFGIMMLLLIAVLITGFVWYC). Over 119–154 (CAYHFYLQDLNRNRVYFYGRRETVPIHDRSATVYDE) the chain is Cytoplasmic.

It localises to the membrane. The polypeptide is PTTG1IP family member 2 (Homo sapiens (Human)).